A 68-amino-acid polypeptide reads, in one-letter code: Protein SlyX homolog (68 aa).

Belongs to the SlyX family.

This is Protein SlyX homolog from Pseudomonas syringae pv. tomato (strain ATCC BAA-871 / DC3000).